Consider the following 239-residue polypeptide: MAHRIIAQNRGKGGPTYRAPSHRYKAALRHAGKNDALVSGNVIDIEHDPARHAPIALARLDSGEKIYVLATEGLGVGDTVSWGTGGTVKNGNTLPLGEIPVGAYVCNIEARPNDGGKFVRSSGVQALVIGKADDGRVGIRMPSGKNKWFNGACMATVGIVAGGGRGEKPFVKAGKKHFHVRSSSERWPRVKGVCMNVIDHPFGGGGHQHCGRPKTVARGTSPGRKVGHVAARRTGKWKK.

The interval 205 to 224 is disordered; it reads GGHQHCGRPKTVARGTSPGR.

The protein belongs to the universal ribosomal protein uL2 family. As to quaternary structure, part of the 50S ribosomal subunit. Forms a bridge to the 30S subunit in the 70S ribosome.

Functionally, one of the primary rRNA binding proteins. Required for association of the 30S and 50S subunits to form the 70S ribosome, for tRNA binding and peptide bond formation. It has been suggested to have peptidyltransferase activity; this is somewhat controversial. Makes several contacts with the 16S rRNA in the 70S ribosome. In Methanoculleus marisnigri (strain ATCC 35101 / DSM 1498 / JR1), this protein is Large ribosomal subunit protein uL2.